The primary structure comprises 342 residues: Putative gluconeogenesis factor (342 aa).

Residues 318–342 form a disordered region; that stretch reads SEPPVAATQEIPIDGGRPRGDDAWR. A Phosphothreonine modification is found at Thr-325. The span at 333–342 shows a compositional bias: basic and acidic residues; sequence GRPRGDDAWR.

It belongs to the gluconeogenesis factor family. Phosphorylated by PknA and/or PknB.

It localises to the cytoplasm. In terms of biological role, required for morphogenesis under gluconeogenic growth conditions. This chain is Putative gluconeogenesis factor, found in Mycobacterium tuberculosis (strain CDC 1551 / Oshkosh).